Reading from the N-terminus, the 317-residue chain is Tyrosine--tRNA ligase (317 aa).

Tyr33 lines the L-tyrosine pocket. A 'HIGH' region motif is present at residues 38–46 (PSGKIHMGH). The L-tyrosine site is built by Tyr155, Gln159, Asp162, and Gln177. The 'KMSKS' region signature appears at 211-215 (KMASS). ATP is bound at residue Ser214.

It belongs to the class-I aminoacyl-tRNA synthetase family. TyrS type 3 subfamily. Homodimer.

The protein localises to the cytoplasm. It carries out the reaction tRNA(Tyr) + L-tyrosine + ATP = L-tyrosyl-tRNA(Tyr) + AMP + diphosphate + H(+). Catalyzes the attachment of tyrosine to tRNA(Tyr) in a two-step reaction: tyrosine is first activated by ATP to form Tyr-AMP and then transferred to the acceptor end of tRNA(Tyr). This is Tyrosine--tRNA ligase from Methanosarcina acetivorans (strain ATCC 35395 / DSM 2834 / JCM 12185 / C2A).